The following is a 1029-amino-acid chain: Carbamoyl phosphate synthase large chain (1029 aa).

The tract at residues 1–402 (MPKRTDLQTI…SLQKALRSTE (402 aa)) is carboxyphosphate synthetic domain. Arg129, Arg169, Gly175, Gly176, Glu208, Ile210, Glu215, Gly241, Val242, His243, Gln285, and Glu299 together coordinate ATP. The region spanning 133–328 (QAAMKKIGVE…IAKIAALLAV (196 aa)) is the ATP-grasp 1 domain. 3 residues coordinate Mg(2+): Gln285, Glu299, and Asn301. Mn(2+) contacts are provided by Gln285, Glu299, and Asn301. The tract at residues 403–544 (SDIRGVYAEM…YHYSTYEWED (142 aa)) is oligomerization domain. The segment at 545–929 (EVTGTDKPKV…AFYRAQLGAK (385 aa)) is carbamoyl phosphate synthetic domain. The ATP-grasp 2 domain occupies 671 to 863 (NALCERLGLS…LAKSAARIAV (193 aa)). The ATP site is built by Arg707, Gln747, Leu749, Glu754, Gly779, Val780, His781, Ser782, Gln822, and Glu834. Gln822, Glu834, and Asn836 together coordinate Mg(2+). Positions 822, 834, and 836 each coordinate Mn(2+). Positions 930–1028 (SYLPLSGTAL…QDWQTQEAVA (99 aa)) constitute an MGS-like domain. The allosteric domain stretch occupies residues 930-1029 (SYLPLSGTAL…DWQTQEAVAG (100 aa)).

Belongs to the CarB family. In terms of assembly, composed of two chains; the small (or glutamine) chain promotes the hydrolysis of glutamine to ammonia, which is used by the large (or ammonia) chain to synthesize carbamoyl phosphate. Tetramer of heterodimers (alpha,beta)4. Requires Mg(2+) as cofactor. Mn(2+) serves as cofactor.

It catalyses the reaction hydrogencarbonate + L-glutamine + 2 ATP + H2O = carbamoyl phosphate + L-glutamate + 2 ADP + phosphate + 2 H(+). The enzyme catalyses hydrogencarbonate + NH4(+) + 2 ATP = carbamoyl phosphate + 2 ADP + phosphate + 2 H(+). The protein operates within amino-acid biosynthesis; L-arginine biosynthesis; carbamoyl phosphate from bicarbonate: step 1/1. It participates in pyrimidine metabolism; UMP biosynthesis via de novo pathway; (S)-dihydroorotate from bicarbonate: step 1/3. Functionally, large subunit of the glutamine-dependent carbamoyl phosphate synthetase (CPSase). CPSase catalyzes the formation of carbamoyl phosphate from the ammonia moiety of glutamine, carbonate, and phosphate donated by ATP, constituting the first step of 2 biosynthetic pathways, one leading to arginine and/or urea and the other to pyrimidine nucleotides. The large subunit (synthetase) binds the substrates ammonia (free or transferred from glutamine from the small subunit), hydrogencarbonate and ATP and carries out an ATP-coupled ligase reaction, activating hydrogencarbonate by forming carboxy phosphate which reacts with ammonia to form carbamoyl phosphate. The chain is Carbamoyl phosphate synthase large chain from Deinococcus deserti (strain DSM 17065 / CIP 109153 / LMG 22923 / VCD115).